Reading from the N-terminus, the 327-residue chain is Leucotoxin LukD (327 aa).

Positions 1–26 are cleaved as a signal peptide; sequence MKIEKLGKSSVASSIALLLLSNTVDA.

The protein belongs to the aerolysin family. Toxicity requires sequential binding and synergistic association of a class S and a class F component which form heterooligomeric complexes. LukE (class S) associates with LukD (class F). LukD can also associate with HlgA.

Its subcellular location is the secreted. In terms of biological role, part of a bi-component leucotoxin that acts by forming pores in the membrane of the target cells. LukE-LukD is as effective as the Panton-Valentine leucocidin (PVL) for inducing dermonecrosis when injected in the rabbit skin, but not hemolytic and poorly leucotoxic on human blood cells compared to other leucotoxins expressed by S.aureus. HlgA-LukD is a Ca(2+) channel inducer. In Staphylococcus aureus, this protein is Leucotoxin LukD (lukD).